A 353-amino-acid polypeptide reads, in one-letter code: Holliday junction branch migration complex subunit RuvB (353 aa).

A disordered region spans residues 1-25 (MDPGPAGDEVSLAPQQETAEQDVET). The segment at 1–188 (MDPGPAGDEV…FGFTAHMEFY (188 aa)) is large ATPase domain (RuvB-L). ATP is bound by residues Leu27, Arg28, Gly69, Lys72, Thr73, Ser74, 135 to 137 (EDY), Arg178, Tyr188, and Arg225. Thr73 is a Mg(2+) binding site. Positions 189–259 (EPAELELVVR…VARAALEVYD (71 aa)) are small ATPAse domain (RuvB-S). Positions 262 to 353 (EHGLDRLDRA…ATRSLFADEV (92 aa)) are head domain (RuvB-H). 2 residues coordinate DNA: Arg317 and Arg322.

This sequence belongs to the RuvB family. In terms of assembly, homohexamer. Forms an RuvA(8)-RuvB(12)-Holliday junction (HJ) complex. HJ DNA is sandwiched between 2 RuvA tetramers; dsDNA enters through RuvA and exits via RuvB. An RuvB hexamer assembles on each DNA strand where it exits the tetramer. Each RuvB hexamer is contacted by two RuvA subunits (via domain III) on 2 adjacent RuvB subunits; this complex drives branch migration. In the full resolvosome a probable DNA-RuvA(4)-RuvB(12)-RuvC(2) complex forms which resolves the HJ.

Its subcellular location is the cytoplasm. It catalyses the reaction ATP + H2O = ADP + phosphate + H(+). Functionally, the RuvA-RuvB-RuvC complex processes Holliday junction (HJ) DNA during genetic recombination and DNA repair, while the RuvA-RuvB complex plays an important role in the rescue of blocked DNA replication forks via replication fork reversal (RFR). RuvA specifically binds to HJ cruciform DNA, conferring on it an open structure. The RuvB hexamer acts as an ATP-dependent pump, pulling dsDNA into and through the RuvAB complex. RuvB forms 2 homohexamers on either side of HJ DNA bound by 1 or 2 RuvA tetramers; 4 subunits per hexamer contact DNA at a time. Coordinated motions by a converter formed by DNA-disengaged RuvB subunits stimulates ATP hydrolysis and nucleotide exchange. Immobilization of the converter enables RuvB to convert the ATP-contained energy into a lever motion, pulling 2 nucleotides of DNA out of the RuvA tetramer per ATP hydrolyzed, thus driving DNA branch migration. The RuvB motors rotate together with the DNA substrate, which together with the progressing nucleotide cycle form the mechanistic basis for DNA recombination by continuous HJ branch migration. Branch migration allows RuvC to scan DNA until it finds its consensus sequence, where it cleaves and resolves cruciform DNA. This chain is Holliday junction branch migration complex subunit RuvB, found in Saccharopolyspora erythraea (strain ATCC 11635 / DSM 40517 / JCM 4748 / NBRC 13426 / NCIMB 8594 / NRRL 2338).